We begin with the raw amino-acid sequence, 557 residues long: Potassium-transporting ATPase potassium-binding subunit (557 aa).

Helical transmembrane passes span 5–25 (GFLL…PLGS), 63–83 (LSAI…MLLG), 132–152 (GLTV…FALI), 170–190 (LLRI…LFFI), 253–273 (FVQM…FGEV), 283–303 (LLWA…WAEV), 329–349 (VLVS…AVIA), 356–376 (ALGG…FGGV), 379–399 (GLYG…LMIG), 416–436 (LTAL…ALAM), 484–504 (LLAL…MAIA), and 526–546 (LFVG…FIPA).

Belongs to the KdpA family. As to quaternary structure, the system is composed of three essential subunits: KdpA, KdpB and KdpC.

Its subcellular location is the cell inner membrane. Functionally, part of the high-affinity ATP-driven potassium transport (or Kdp) system, which catalyzes the hydrolysis of ATP coupled with the electrogenic transport of potassium into the cytoplasm. This subunit binds the periplasmic potassium ions and delivers the ions to the membrane domain of KdpB through an intramembrane tunnel. The sequence is that of Potassium-transporting ATPase potassium-binding subunit from Escherichia coli O127:H6 (strain E2348/69 / EPEC).